We begin with the raw amino-acid sequence, 432 residues long: Ribosomal protein uS12 methylthiotransferase RimO (432 aa).

The MTTase N-terminal domain occupies 1-112 (MKIGVVSLGC…ILNYLGLKEK (112 aa)). Residues Cys10, Cys46, Cys75, Cys134, Cys138, and Cys141 each coordinate [4Fe-4S] cluster. The region spanning 120–350 (STPRSYAYLK…MAIQRGITRK (231 aa)) is the Radical SAM core domain. The 70-residue stretch at 353-422 (EEFLGKEIEV…DYDLAGRDTE (70 aa)) folds into the TRAM domain.

The protein belongs to the methylthiotransferase family. RimO subfamily. The cofactor is [4Fe-4S] cluster.

Its subcellular location is the cytoplasm. It carries out the reaction L-aspartate(89)-[ribosomal protein uS12]-hydrogen + (sulfur carrier)-SH + AH2 + 2 S-adenosyl-L-methionine = 3-methylsulfanyl-L-aspartate(89)-[ribosomal protein uS12]-hydrogen + (sulfur carrier)-H + 5'-deoxyadenosine + L-methionine + A + S-adenosyl-L-homocysteine + 2 H(+). Functionally, catalyzes the methylthiolation of an aspartic acid residue of ribosomal protein uS12. The sequence is that of Ribosomal protein uS12 methylthiotransferase RimO from Aquifex aeolicus (strain VF5).